The following is a 571-amino-acid chain: Proline--tRNA ligase (571 aa).

This sequence belongs to the class-II aminoacyl-tRNA synthetase family. ProS type 1 subfamily. As to quaternary structure, homodimer.

The protein localises to the cytoplasm. The catalysed reaction is tRNA(Pro) + L-proline + ATP = L-prolyl-tRNA(Pro) + AMP + diphosphate. Catalyzes the attachment of proline to tRNA(Pro) in a two-step reaction: proline is first activated by ATP to form Pro-AMP and then transferred to the acceptor end of tRNA(Pro). As ProRS can inadvertently accommodate and process non-cognate amino acids such as alanine and cysteine, to avoid such errors it has two additional distinct editing activities against alanine. One activity is designated as 'pretransfer' editing and involves the tRNA(Pro)-independent hydrolysis of activated Ala-AMP. The other activity is designated 'posttransfer' editing and involves deacylation of mischarged Ala-tRNA(Pro). The misacylated Cys-tRNA(Pro) is not edited by ProRS. In Acinetobacter baumannii (strain ATCC 17978 / DSM 105126 / CIP 53.77 / LMG 1025 / NCDC KC755 / 5377), this protein is Proline--tRNA ligase.